Consider the following 273-residue polypeptide: Phosphate import ATP-binding protein PstB (273 aa).

Residues methionine 1 to aspartate 20 are disordered. The region spanning valine 27–isoleucine 268 is the ABC transporter domain. An ATP-binding site is contributed by glycine 59–serine 66.

Belongs to the ABC transporter superfamily. Phosphate importer (TC 3.A.1.7) family. As to quaternary structure, the complex is composed of two ATP-binding proteins (PstB), two transmembrane proteins (PstC and PstA) and a solute-binding protein (PstS).

The protein localises to the cell inner membrane. The enzyme catalyses phosphate(out) + ATP + H2O = ADP + 2 phosphate(in) + H(+). Its function is as follows. Part of the ABC transporter complex PstSACB involved in phosphate import. Responsible for energy coupling to the transport system. This chain is Phosphate import ATP-binding protein PstB, found in Nitrobacter winogradskyi (strain ATCC 25391 / DSM 10237 / CIP 104748 / NCIMB 11846 / Nb-255).